Reading from the N-terminus, the 425-residue chain is Enolase (425 aa).

Q163 is a binding site for (2R)-2-phosphoglycerate. Catalysis depends on E205, which acts as the Proton donor. D242, E285, and D312 together coordinate Mg(2+). Residues K337, R366, S367, and K388 each coordinate (2R)-2-phosphoglycerate. K337 acts as the Proton acceptor in catalysis.

The protein belongs to the enolase family. Mg(2+) serves as cofactor.

The protein localises to the cytoplasm. The protein resides in the secreted. It localises to the cell surface. The catalysed reaction is (2R)-2-phosphoglycerate = phosphoenolpyruvate + H2O. The protein operates within carbohydrate degradation; glycolysis; pyruvate from D-glyceraldehyde 3-phosphate: step 4/5. Functionally, catalyzes the reversible conversion of 2-phosphoglycerate (2-PG) into phosphoenolpyruvate (PEP). It is essential for the degradation of carbohydrates via glycolysis. The polypeptide is Enolase (Syntrophomonas wolfei subsp. wolfei (strain DSM 2245B / Goettingen)).